A 488-amino-acid chain; its full sequence is 26S proteasome non-ATPase regulatory subunit 3 homolog A (488 aa).

The region spanning 240–421 (CRYLFYLGKI…GCMVSKETGD (182 aa)) is the PCI domain. Residues 451–488 (RFPPNTHKEKESDEKRRERKQQEEELAKHMAEEDDDDF) form a disordered region. The segment covering 456–481 (THKEKESDEKRRERKQQEEELAKHMA) has biased composition (basic and acidic residues).

The protein belongs to the proteasome subunit S3 family. Component of the 19S regulatory particle (RP/PA700) lid subcomplex of the 26S proteasome. The 26S proteasome is composed of a core protease (CP), known as the 20S proteasome, capped at one or both ends by the 19S regulatory particle (RP/PA700). The RP/PA700 complex is composed of at least 17 different subunits in two subcomplexes, the base and the lid, which form the portions proximal and distal to the 20S proteolytic core, respectively. Interacts with UCH1 and UCH2. Ubiquitous with highest expression in flowers.

Functionally, acts as a regulatory subunit of the 26 proteasome which is involved in the ATP-dependent degradation of ubiquitinated proteins. The chain is 26S proteasome non-ATPase regulatory subunit 3 homolog A from Arabidopsis thaliana (Mouse-ear cress).